A 206-amino-acid chain; its full sequence is Protein GET1 (206 aa).

Topologically, residues 1 to 4 (MPSL) are lumenal. A helical membrane pass occupies residues 5 to 24 (LITVLFLNVIIYVVNTVGAA). Residues 25-110 (TVDGLLWLLY…TFDMTIKIAR (86 aa)) lie on the Cytoplasmic side of the membrane. Residues 75–100 (AKLRRRHDKALEAYEAKNNELTQSKS) adopt a coiled-coil conformation. A helical transmembrane segment spans residues 111–131 (WAATSGLMLFLQFWYSKTPIF). The Lumenal portion of the chain corresponds to 132-155 (TLPPGWIPWQVQWVLSFPRAPMGT). The chain crosses the membrane as a helical span at residues 156–172 (VSIQIWGGACATVVALV). Residues 173 to 206 (GDAMKASLAYVSKPKIDRIKLGATMEGKEGKKRQ) lie on the Cytoplasmic side of the membrane.

The protein belongs to the WRB/GET1 family. Interacts with GET3.

Its subcellular location is the endoplasmic reticulum membrane. Functionally, required for the post-translational delivery of tail-anchored (TA) proteins to the endoplasmic reticulum. Acts as a membrane receptor for soluble GET3, which recognizes and selectively binds the transmembrane domain of TA proteins in the cytosol. This Ajellomyces capsulatus (strain G186AR / H82 / ATCC MYA-2454 / RMSCC 2432) (Darling's disease fungus) protein is Protein GET1.